The primary structure comprises 218 residues: Small ribosomal subunit protein uS3 (218 aa).

A KH type-2 domain is found at 39-107; the sequence is IRDYIKSKLL…QISINIVEIK (69 aa).

Belongs to the universal ribosomal protein uS3 family. Part of the 30S ribosomal subunit. Forms a tight complex with proteins S10 and S14.

In terms of biological role, binds the lower part of the 30S subunit head. Binds mRNA in the 70S ribosome, positioning it for translation. The protein is Small ribosomal subunit protein uS3 of Desulforudis audaxviator (strain MP104C).